Reading from the N-terminus, the 316-residue chain is Olfactory receptor 4N4 (316 aa).

The Extracellular portion of the chain corresponds to 1 to 25 (MKIANNTVVTEFILLGLTQSQDIQL). Residue Asn-5 is glycosylated (N-linked (GlcNAc...) asparagine). Residues 26 to 49 (LVFVLILIFYLIILPGNFLIIFTI) traverse the membrane as a helical segment. Residues 50 to 57 (RSDPGLTA) are Cytoplasmic-facing. The chain crosses the membrane as a helical span at residues 58–79 (PLYLFLGNLAFLDASYSFIVAP). Residues 80 to 100 (RMLVDFLSEKKVISYRGCITQ) lie on the Extracellular side of the membrane. A disulfide bridge connects residues Cys-97 and Cys-189. A helical membrane pass occupies residues 101–120 (LFFLHFLGGGEGLLLVVMAF). At 121 to 139 (DRYIAICRPLHCSTVMNPR) the chain is on the cytoplasmic side. Residues 140–158 (ACYAMMLALWLGGFVHSII) form a helical membrane-spanning segment. Topologically, residues 159–195 (QVVLILRLPFCGPNQLDNFFCDVRQVIKLACTDMFVV) are extracellular. A helical membrane pass occupies residues 196 to 219 (ELLMVFNSGLMTLLCFLGLLASYA). At 220–235 (VILCHVRRAASEGKNK) the chain is on the cytoplasmic side. A helical membrane pass occupies residues 236-258 (AMSTCTTRVIIILLMFGPAIFIY). Topologically, residues 259–269 (MCPFRALPADK) are extracellular. The helical transmembrane segment at 270–289 (MVSLFHTVIFPLMNPMIYTL) threads the bilayer. Topologically, residues 290–316 (RNQEVKTSMKRLLSRHVVCQVDFIIRN) are cytoplasmic.

This sequence belongs to the G-protein coupled receptor 1 family.

It is found in the cell membrane. Odorant receptor. This is Olfactory receptor 4N4 (OR4N4) from Homo sapiens (Human).